The chain runs to 284 residues: NAD(P)H-hydrate epimerase (284 aa).

The N-terminal 55 residues, 1 to 55 (MSGLRTLLGLGLLVSSSRFPRVVARGGPRCPGPAWWAARPMHLGDSTMAGGTVKY), are a transit peptide targeting the mitochondrion. Positions 61–271 (AQAVDEELFN…DLEKKYQLNL (211 aa)) constitute a YjeF N-terminal domain. (6S)-NADPHX is bound at residue 115 to 119 (NNGGD). N116 contributes to the K(+) binding site. N6-succinyllysine is present on K140. A K(+)-binding site is contributed by D181. (6S)-NADPHX-binding positions include 185–191 (GFSFKGA) and D214. S217 is a binding site for K(+).

Belongs to the NnrE/AIBP family. Homodimer. Interacts with APOA1 and APOA2. K(+) serves as cofactor. Undergoes physiological phosphorylation during sperm capacitation, downstream to PKA activation.

It localises to the mitochondrion. The protein resides in the secreted. The catalysed reaction is (6R)-NADHX = (6S)-NADHX. It catalyses the reaction (6R)-NADPHX = (6S)-NADPHX. Its function is as follows. Catalyzes the epimerization of the S- and R-forms of NAD(P)HX, a damaged form of NAD(P)H that is a result of enzymatic or heat-dependent hydration. This is a prerequisite for the S-specific NAD(P)H-hydrate dehydratase to allow the repair of both epimers of NAD(P)HX. Accelerates cholesterol efflux from endothelial cells to high-density lipoprotein (HDL) and thereby regulates angiogenesis. The protein is NAD(P)H-hydrate epimerase of Monodelphis domestica (Gray short-tailed opossum).